The primary structure comprises 806 residues: Putative phage-related protein YobO (806 aa).

Positions methionine 1–serine 23 are disordered. Polar residues predominate over residues leucine 12–glutamate 21. 6 PbH1 repeats span residues valine 199–serine 221, serine 237–tyrosine 259, serine 260–aspartate 292, serine 294–alanine 315, serine 419–leucine 441, and threonine 448–glycine 470.

The polypeptide is Putative phage-related protein YobO (yobO) (Bacillus subtilis (strain 168)).